We begin with the raw amino-acid sequence, 107 residues long: Small ribosomal subunit protein uS17 (107 aa).

The protein belongs to the universal ribosomal protein uS17 family. In terms of assembly, part of the 30S ribosomal subunit.

One of the primary rRNA binding proteins, it binds specifically to the 5'-end of 16S ribosomal RNA. The polypeptide is Small ribosomal subunit protein uS17 (Thermotoga sp. (strain RQ2)).